Reading from the N-terminus, the 212-residue chain is Mediator of RNA polymerase II transcription subunit 20 (212 aa).

This sequence belongs to the Mediator complex subunit 20 family. As to quaternary structure, interacts with PPARG. Component of the Mediator complex, which is composed of MED1, MED4, MED6, MED7, MED8, MED9, MED10, MED11, MED12, MED13, MED13L, MED14, MED15, MED16, MED17, MED18, MED19, MED20, MED21, MED22, MED23, MED24, MED25, MED26, MED27, MED29, MED30, MED31, CCNC, CDK8 and CDC2L6/CDK11. The MED12, MED13, CCNC and CDK8 subunits form a distinct module termed the CDK8 module. Mediator containing the CDK8 module is less active than Mediator lacking this module in supporting transcriptional activation. Individual preparations of the Mediator complex lacking one or more distinct subunits have been variously termed ARC, CRSP, DRIP, PC2, SMCC and TRAP.

The protein localises to the nucleus. In terms of biological role, component of the Mediator complex, a coactivator involved in the regulated transcription of nearly all RNA polymerase II-dependent genes. Mediator functions as a bridge to convey information from gene-specific regulatory proteins to the basal RNA polymerase II transcription machinery. Mediator is recruited to promoters by direct interactions with regulatory proteins and serves as a scaffold for the assembly of a functional preinitiation complex with RNA polymerase II and the general transcription factors. The sequence is that of Mediator of RNA polymerase II transcription subunit 20 (MED20) from Homo sapiens (Human).